A 95-amino-acid polypeptide reads, in one-letter code: Small integral membrane protein 26 (95 aa).

The helical transmembrane segment at 13 to 35 (MSVVYGIGTWSVLGSLLYYSRTM) threads the bilayer.

The protein belongs to the SMIM26 family. Interacts with AGK and SLC25A11. In terms of tissue distribution, detected in kidney (at protein level).

Its subcellular location is the mitochondrion outer membrane. Its function is as follows. May play a role in cell viability. The sequence is that of Small integral membrane protein 26 from Homo sapiens (Human).